We begin with the raw amino-acid sequence, 594 residues long: Estrogen receptor (594 aa).

Residues 1 to 184 form a modulating (transactivation AF-1); mediates interaction with MACROD1 region; the sequence is MTMTLHTKAS…AMESAKETRY (184 aa). Residue serine 10 is glycosylated (O-linked (GlcNAc) serine). The tract at residues 35–47 is required for interaction with NCOA1; the sequence is LERPLGEVYVESS. An interaction with DDX5; self-association region spans residues 35–174; sequence LERPLGEVYV…LASSGDKGSM (140 aa). Phosphoserine; by CDK2 is present on residues serine 104 and serine 106. Serine 118 bears the Phosphoserine mark. The interval 152 to 173 is disordered; it reads PNADNRRQGGRERLASSGDKGS. Positions 154–165 are enriched in basic and acidic residues; it reads ADNRRQGGRERL. At serine 167 the chain carries Phosphoserine; by CK2. 2 NR C4-type zinc fingers span residues 185–205 and 221–245; these read CAVCNDYASGYHYGVWSCEGC and CPATNQCTIDKNRRKSCQACRLRKC. The nuclear receptor DNA-binding region spans 185 to 250; sequence CAVCNDYASG…RLRKCYEVGM (66 aa). The interval 185–310 is mediates interaction with DNTTIP2; it reads CAVCNDYASG…TKKISPVLSL (126 aa). A hinge region spans residues 251–310; that stretch reads MKGGIRKDRRGGRMLKHKRQRDDGEGRNEAGPSGDRRPANFWPSPLLIKHTKKISPVLSL. The segment covering 257-269 has biased composition (basic residues); that stretch reads KDRRGGRMLKHKR. Residues 257–293 are disordered; sequence KDRRGGRMLKHKRQRDDGEGRNEAGPSGDRRPANFWP. Arginine 260 bears the Asymmetric dimethylarginine; by PRMT1 mark. An interaction with AKAP13 region spans residues 262–594; the sequence is GRMLKHKRQR…GEAEGFPNTI (333 aa). The self-association stretch occupies residues 264 to 594; that stretch reads MLKHKRQRDD…GEAEGFPNTI (331 aa). A compositionally biased stretch (basic and acidic residues) spans 270–288; sequence QRDDGEGRNEAGPSGDRRP. In terms of domain architecture, NR LBD spans 311–546; that stretch reads TAEQMISALL…DLLLEMLDAH (236 aa). Residues 311–594 form a transactivation AF-2 region; sequence TAEQMISALL…GEAEGFPNTI (284 aa). The 17beta-estradiol site is built by glutamate 353 and arginine 394. Cysteine 447 is lipidated: S-palmitoyl cysteine. Histidine 523 contacts 17beta-estradiol. Tyrosine 536 carries the phosphotyrosine; by Tyr-kinases modification. Residues 551-575 are disordered; the sequence is PANHGGAPMEETNQSQLATTGSTSP. Residues 561–575 show a composition bias toward polar residues; sequence ETNQSQLATTGSTSP. O-linked (GlcNAc) threonine glycosylation is present at threonine 570.

This sequence belongs to the nuclear hormone receptor family. NR3 subfamily. Binds DNA as a homodimer. Can form a heterodimer with ESR2. Interacts with coactivator NCOA5. Interacts with PELP1, the interaction is enhanced by 17-beta-estradiol; the interaction increases ESR1 transcriptional activity. Interacts with NCOA7; the interaction is ligand-inducible. Interacts with AKAP13, CUEDC2, HEXIM1, KDM5A, MAP1S, SMARD1, and UBE1C. Interacts with MUC1; the interaction is stimulated by 7 beta-estradiol (E2) and enhances ESR1-mediated transcription. Interacts with DNTTIP2, and UIMC1. Interacts with KMT2D/MLL2. Interacts with ATAD2; the interaction is enhanced by estradiol. Interacts with KIF18A and LDB1. Interacts with RLIM (via its C-terminus). Interacts with MACROD1. Interacts with SH2D4A and PLCG. Interacts with SH2D4A; the interaction blocks binding to PLCG and inhibits estrogen-induced cell proliferation. Interacts with DYNLL1. Interacts with CCDC62; the interaction requires estradiol and appears to enhance the transcription of target genes. Interacts with NR2C1; the interaction prevents homodimerization of ESR1 and suppresses its transcriptional activity and cell growth. Interacts with DNAAF4. Interacts with PRMT2. Interacts with RBFOX2. Interacts with EP300; the interaction is estrogen-dependent and enhanced by CITED1. Interacts with CITED1; the interaction is estrogen-dependent. Interacts with FAM120B, FOXL2, PHB2 and SLC30A9. Interacts with coactivators NCOA3 and NCOA6. Interacts with STK3/MST2 only in the presence of SAV1 and vice-versa. Binds to CSNK1D. Interacts with NCOA2; NCOA2 can interact with ESR1 AF-1 and AF-2 domains simultaneously and mediate their transcriptional synergy. Interacts with DDX5. Interacts with NCOA1; the interaction seems to require a self-association of N-terminal and C-terminal regions. Interacts with ZNF366, DDX17, NFKB1, RELA, SP1 and SP3. Interacts with NRIP1. Interacts with GPER1; the interaction occurs in an estrogen-dependent manner. Interacts with CLOCK and the interaction is stimulated by estrogen. Interacts with TRIP4 (ufmylated); estrogen dependent. Interacts with LMTK3; the interaction phosphorylates ESR1 (in vitro) and protects it against proteasomal degradation. Interacts with CCAR2 (via N-terminus) in a ligand-independent manner. Interacts with ZFHX3. Interacts with SFR1 in a ligand-dependent and -independent manner. Interacts with DCAF13, LATS1 and DCAF1; regulates ESR1 ubiquitination and ubiquitin-mediated proteasomal degradation. Interacts (via DNA-binding domain) with POU4F2 (C-terminus); this interaction increases the estrogen receptor ESR1 transcriptional activity in a DNA- and ligand 17-beta-estradiol-independent manner. Interacts with ESRRB isoform 1. Interacts with UBE3A and WBP2. Interacts with GTF2B. Interacts with RBM39. In the absence of hormonal ligand, interacts with TACC1. Interacts with PI3KR1 or PI3KR2 and PTK2/FAK1. Interacts with SRC. Interacts with BAG1; the interaction is promoted in the absence of estradiol (17-beta-estradiol/E2). Interacts with and ubiquitinated by STUB1; the interaction is promoted in the absence of estradiol (17-beta-estradiol/E2). Interacts with NEDD8. Ubiquitinated; regulated by LATS1 via DCAF1 it leads to ESR1 proteasomal degradation. Deubiquitinated by OTUB1. Ubiquitinated by STUB1/CHIP; in the CA1 hippocampal region following loss of endogenous circulating estradiol (17-beta-estradiol/E2). Ubiquitinated by UBR5, leading to its degradation: UBR5 specifically recognizes and binds ligand-bound ESR1 when it is not associated with coactivators (NCOAs). In presence of NCOAs, the UBR5-degron is not accessible, preventing its ubiquitination and degradation. In terms of processing, phosphorylated by cyclin A/CDK2 and CK1. Phosphorylation probably enhances transcriptional activity. Dephosphorylation at Ser-118 by PPP5C inhibits its transactivation activity. Phosphorylated by LMTK3 (in vitro). Post-translationally, palmitoylated at Cys-447 by ZDHHC7 and ZDHHC21. Palmitoylation is required for plasma membrane targeting and for rapid intracellular signaling via ERK and AKT kinases and cAMP generation, but not for signaling mediated by the nuclear hormone receptor. Dimethylated by PRMT1 at Arg-260. The methylation may favor cytoplasmic localization. Demethylated by JMJD6 at Arg-260.

It is found in the nucleus. The protein localises to the cytoplasm. It localises to the golgi apparatus. The protein resides in the cell membrane. Functionally, nuclear hormone receptor. The steroid hormones and their receptors are involved in the regulation of eukaryotic gene expression and affect cellular proliferation and differentiation in target tissues. Ligand-dependent nuclear transactivation involves either direct homodimer binding to a palindromic estrogen response element (ERE) sequence or association with other DNA-binding transcription factors, such as AP-1/c-Jun, c-Fos, ATF-2, Sp1 and Sp3, to mediate ERE-independent signaling. Ligand binding induces a conformational change allowing subsequent or combinatorial association with multiprotein coactivator complexes through LXXLL motifs of their respective components. Mutual transrepression occurs between the estrogen receptor (ER) and NF-kappa-B in a cell-type specific manner. Decreases NF-kappa-B DNA-binding activity and inhibits NF-kappa-B-mediated transcription from the IL6 promoter and displace RELA/p65 and associated coregulators from the promoter. Recruited to the NF-kappa-B response element of the CCL2 and IL8 promoters and can displace CREBBP. Present with NF-kappa-B components RELA/p65 and NFKB1/p50 on ERE sequences. Can also act synergistically with NF-kappa-B to activate transcription involving respective recruitment adjacent response elements; the function involves CREBBP. Can activate the transcriptional activity of TFF1. Also mediates membrane-initiated estrogen signaling involving various kinase cascades. Essential for MTA1-mediated transcriptional regulation of BRCA1 and BCAS3. Maintains neuronal survival in response to ischemic reperfusion injury when in the presence of circulating estradiol (17-beta-estradiol/E2). The sequence is that of Estrogen receptor (ESR1) from Equus caballus (Horse).